A 61-amino-acid polypeptide reads, in one-letter code: Photosystem II reaction center protein K (61 aa).

Positions 1–24 are excised as a propeptide; sequence MLNILNLICICLNFALYSSSFFFT. The chain crosses the membrane as a helical span at residues 40 to 60; the sequence is MPVIPLFFFLLAFVWQAAVSF.

This sequence belongs to the PsbK family. In terms of assembly, PSII is composed of 1 copy each of membrane proteins PsbA, PsbB, PsbC, PsbD, PsbE, PsbF, PsbH, PsbI, PsbJ, PsbK, PsbL, PsbM, PsbT, PsbX, PsbY, PsbZ, Psb30/Ycf12, at least 3 peripheral proteins of the oxygen-evolving complex and a large number of cofactors. It forms dimeric complexes.

It localises to the plastid. Its subcellular location is the chloroplast thylakoid membrane. In terms of biological role, one of the components of the core complex of photosystem II (PSII). PSII is a light-driven water:plastoquinone oxidoreductase that uses light energy to abstract electrons from H(2)O, generating O(2) and a proton gradient subsequently used for ATP formation. It consists of a core antenna complex that captures photons, and an electron transfer chain that converts photonic excitation into a charge separation. The protein is Photosystem II reaction center protein K of Populus alba (White poplar).